Here is a 430-residue protein sequence, read N- to C-terminus: MSYTKLLTQLSFPNRISGPILETSLSDVSIGEICNIQAGIESNEIVARAQVVGFHDEKTILSLIGNSRGLSRQTLIKPTAQFLHTQVGRGLLGAVVNPLGEVTDKFAVTDNSEILYRPVDNAPPLYSERAAIEKPFLTGIKVIDSLLTCGEGQRMGIFASAGCGKTFLMNMLIEHSGADIYVIGLIGERGREVTETVDYLKNSEKKSRCVLVYATSDYSSVDRCNAAYIATAIAEFFRTEGHKVALFIDSLTRYARALRDVALAAGESPARRGYPVSVFDSLPRLLERPGKLKAGGSITAFYTVLLEDDDFADPLAEEVRSILDGHIYLSRNLAQKGQFPAIDSLKSISRVFTQVVDEKHRIMAAAFRELLSEIEELRTIIDFGEYKPGENASQDKIYNKISVVESFLKQDYRLGFTYEQTMELIGETIR.

An ATP-binding site is contributed by 162–167 (GCGKTF).

The protein belongs to the ATPase alpha/beta chains family. T3SS ATPase subfamily. As to quaternary structure, the core secretion machinery of the T3SS is composed of approximately 20 different proteins, including cytoplasmic components, a base, an export apparatus and a needle. This subunit is part of the cytosolic complex. Forms homohexamers. Interacts directly with MxiN/SctL (stator protein) and Spa13/SctO (stalk protein). Can form a soluble complex with Spa33/SctQ, MxiN/SctL and MxiK/SctK.

It localises to the cytoplasm. The catalysed reaction is ATP + H2O + cellular proteinSide 1 = ADP + phosphate + cellular proteinSide 2.. With respect to regulation, oligomerization increases ATPase activity. Monomeric forms exhibit low-level ATPase activity by forming short-lived oligomers with active site contributions from at least two protomers. In contrast, oligomers exhibit enhanced ATP hydrolysis rates that likely result from multiple preformed active sites within the oligomeric complex. Oligomerization is important for both enzyme activation and T3SS function. Activity is regulated by MxiN/SctL, which differentially regulates the activity of the monomer and the oligomer: it up-regulates the ATPase activity of the monomer, while it down-regulates the activity of the oligomer. Its function is as follows. ATPase component of the type III secretion system (T3SS), also called injectisome, which is used to inject bacterial effector proteins into eukaryotic host cells. Acts as a molecular motor to provide the energy that is required for the export of proteins. Required for type III secretion apparatus (T3SA) formation, proper protein secretion, host cell invasion and virulence. May play a critical role in T3SS substrate recognition, disassembly of the effector/chaperone complex and unfolding of the effector in an ATP-dependent manner prior to secretion. This is Type 3 secretion system ATPase from Shigella flexneri.